The chain runs to 2614 residues: Talin-B (2614 aa).

Residues 85–369 (RPLKVRLMDE…GYIEILMKKR (285 aa)) form the FERM domain. The disordered stretch occupies residues 393–421 (RGQTSQATTSSSLSGYDGNGGREGQYSAP). Residues 395–406 (QTSQATTSSSLS) show a composition bias toward low complexity. Coiled coils occupy residues 1938 to 1965 (TQNIQEQVGKLAQDLKDSKNQLAEASGK) and 2033 to 2057 (NKAILDKSSQELEESIDSLANLVQS). The I/LWEQ domain occupies 2219-2460 (LLFAAGESLE…SIRKKEYSDQ (242 aa)). The disordered stretch occupies residues 2454 to 2557 (KKEYSDQTGN…AAPTAAAPNK (104 aa)). Over residues 2473 to 2487 (KPTTSISVGITPTKR) the composition is skewed to polar residues. Over residues 2517–2537 (KKPAPSQAPSSPVAPVSAPVS) the composition is skewed to low complexity. Positions 2538-2548 (KPSPKPAPKPA) are enriched in pro residues. Residues 2553 to 2614 (AAPNKTYTLE…NNIKTKLGLF (62 aa)) form the HP domain.

It is found in the cytoplasm. The protein localises to the cytoskeleton. Its subcellular location is the cell cortex. In terms of biological role, actin-binding protein required for multicellular morphogenesis. Substrate of pkgB and/or pkbA. The polypeptide is Talin-B (talB) (Dictyostelium discoideum (Social amoeba)).